Consider the following 126-residue polypeptide: Histone H2B 3 (126 aa).

A compositionally biased stretch (low complexity) spans 1-12 (MPEPAKSAPAPK). The disordered stretch occupies residues 1 to 34 (MPEPAKSAPAPKKGSKKAVTKTQKKGDKKRRKTR). N6-acetyllysine is present on residues K6 and K13. Residues 13–34 (KGSKKAVTKTQKKGDKKRRKTR) show a composition bias toward basic residues. S15 carries the post-translational modification Phosphoserine. N6-acetyllysine occurs at positions 16 and 21. The O-linked (GlcNAc) serine glycan is linked to S113. A Glycyl lysine isopeptide (Lys-Gly) (interchain with G-Cter in ubiquitin) cross-link involves residue K121.

The protein belongs to the histone H2B family. In terms of assembly, the nucleosome is a histone octamer containing two molecules each of H2A, H2B, H3 and H4 assembled in one H3-H4 heterotetramer and two H2A-H2B heterodimers. The octamer wraps approximately 147 bp of DNA. Monoubiquitination of Lys-121 by the BRE1 gives a specific tag for epigenetic transcriptional activation and is also prerequisite for histone H3 'Lys-4' and 'Lys-79' methylation. In terms of processing, phosphorylated on Ser-15 during apoptosis; which facilitates apoptotic chromatin condensation. Post-translationally, glcNAcylation at Ser-113 promotes monoubiquitination of Lys-121. It fluctuates in response to extracellular glucose, and associates with transcribed genes.

It localises to the nucleus. The protein resides in the chromosome. Functionally, core component of nucleosome. Nucleosomes wrap and compact DNA into chromatin, limiting DNA accessibility to the cellular machineries which require DNA as a template. Histones thereby play a central role in transcription regulation, DNA repair, DNA replication and chromosomal stability. DNA accessibility is regulated via a complex set of post-translational modifications of histones, also called histone code, and nucleosome remodeling. This is Histone H2B 3 (hist2h2l) from Danio rerio (Zebrafish).